A 1011-amino-acid chain; its full sequence is Translation initiation factor IF-2 (1011 aa).

A compositionally biased stretch (basic and acidic residues) spans Tyr49–Lys77. 2 disordered regions span residues Tyr49–Thr152 and Ala187–Ser407. A compositionally biased stretch (pro residues) spans Ala93–Pro104. Positions Ala105–Glu115 are enriched in low complexity. The segment covering Pro116–Gln126 has biased composition (pro residues). Composition is skewed to low complexity over residues Ala187–Val212 and Thr228–Pro242. Pro residues-rich tracts occupy residues Ala243–Gly252 and Ser276–Gln290. The span at Gly316–Arg329 shows a compositional bias: gly residues. The span at Leu361–Arg380 shows a compositional bias: low complexity. A tr-type G domain is found at Val502–Lys678. The G1 stretch occupies residues Gly511–Thr518. Gly511–Thr518 serves as a coordination point for GTP. A G2 region spans residues Gly536–His540. Positions Asp564 to Gly567 are G3. GTP is bound by residues Asp564–His568 and Asn618–Asp621. The G4 stretch occupies residues Asn618–Asp621. The interval Ser654–Lys656 is G5.

The protein belongs to the TRAFAC class translation factor GTPase superfamily. Classic translation factor GTPase family. IF-2 subfamily.

The protein resides in the cytoplasm. In terms of biological role, one of the essential components for the initiation of protein synthesis. Protects formylmethionyl-tRNA from spontaneous hydrolysis and promotes its binding to the 30S ribosomal subunits. Also involved in the hydrolysis of GTP during the formation of the 70S ribosomal complex. This is Translation initiation factor IF-2 from Koribacter versatilis (strain Ellin345).